Here is a 376-residue protein sequence, read N- to C-terminus: Glutamate 5-kinase (376 aa).

Lys-15 is a binding site for ATP. Substrate contacts are provided by Ser-56, Asp-143, and Asn-155. 175 to 176 (SD) lines the ATP pocket. Residues 281–358 (KGTLTIDAGA…PDVMMILGIT (78 aa)) enclose the PUA domain.

It belongs to the glutamate 5-kinase family.

Its subcellular location is the cytoplasm. It carries out the reaction L-glutamate + ATP = L-glutamyl 5-phosphate + ADP. It functions in the pathway amino-acid biosynthesis; L-proline biosynthesis; L-glutamate 5-semialdehyde from L-glutamate: step 1/2. Catalyzes the transfer of a phosphate group to glutamate to form L-glutamate 5-phosphate. This is Glutamate 5-kinase from Rhodopseudomonas palustris (strain ATCC BAA-98 / CGA009).